A 393-amino-acid chain; its full sequence is Na(+)/H(+) antiporter NhaA 1 (393 aa).

The next 11 helical transmembrane spans lie at 23–43 (AGGV…NSPF), 58–78 (LSLT…LVGL), 96–116 (MLPG…FTAF), 126–146 (GWAV…SLLG), 155–175 (VFLA…IAIF), 178–198 (AEIS…LFVM), 224–244 (GVHA…KAAP), 265–285 (VAFI…FAGL), 298–318 (IMLG…WLAI), 334–354 (LYGV…IGLL), and 367–387 (IGVL…LRLV).

The protein belongs to the NhaA Na(+)/H(+) (TC 2.A.33) antiporter family.

It is found in the cell inner membrane. The catalysed reaction is Na(+)(in) + 2 H(+)(out) = Na(+)(out) + 2 H(+)(in). Its function is as follows. Na(+)/H(+) antiporter that extrudes sodium in exchange for external protons. The protein is Na(+)/H(+) antiporter NhaA 1 of Brucella anthropi (strain ATCC 49188 / DSM 6882 / CCUG 24695 / JCM 21032 / LMG 3331 / NBRC 15819 / NCTC 12168 / Alc 37) (Ochrobactrum anthropi).